The sequence spans 2494 residues: Nuclear receptor corepressor 1 (2494 aa).

Over residues 1–33 (MSSSGYPPNQGAFSTEQGRYSSHPVQYTFPSSR) the composition is skewed to polar residues. 4 disordered regions span residues 1–38 (MSSSGYPPNQGAFSTEQGRYSSHPVQYTFPSSRHQQEF), 53–106 (LLQQ…PRLD), 134–170 (SEVKKEQGLPSKHETTSSPLSGQPGEEQEASPSKLSK), and 198–222 (QQQLEEEAAKPPEPEKPVSPPPVEQ). Residues 71 to 82 (PVSDRPQDRRQG) show a composition bias toward basic and acidic residues. Polar residues predominate over residues 83-92 (YEQQYHSVTQ). Composition is skewed to basic and acidic residues over residues 93–106 (NEHEALESKRPRLD), 134–148 (SEVKKEQGLPSKHET), and 204–213 (EAAKPPEPEK). The interaction with tbl1xr1 stretch occupies residues 154-304 (SGQPGEEQEA…REQNICQRYD (151 aa)). Positions 168–208 (LSKEELIQSMDRVDREIAKVEQQILKLKKKQQQLEEEAAKP) form a coiled coil. The region spanning 427 to 478 (QFMNVWTDHEKEIFKEKFVQHPKNFGLIASYLERKTVSDCVLYYYLTKKNEN) is the SANT 1 domain. Disordered regions lie at residues 488-638 (PKRR…VEHG), 671-913 (NLLQ…LDSK), 981-1007 (RQRQEQLSLESRMSASPGNMSKSPNMD), 1081-1124 (GARL…GTPG), 1413-1434 (IHEIPRQDLGSQESRKTPESSR), 1488-1585 (MGER…TQRE), 1745-1845 (LAFP…QESI), and 1912-1987 (EVVK…AHTK). Composition is skewed to basic and acidic residues over residues 502–525 (AQEEKEIEKVEEEKAERNDKKEEE) and 535–548 (KEELRDGTKDRTDA). Positions 502 to 549 (AQEEKEIEKVEEEKAERNDKKEEERREEEEKEEKEELRDGTKDRTDAI) form a coiled coil. Residues 582–616 (ASEAAAAANAASTATTAPATTTSTTATTTTAALVP) show a composition bias toward low complexity. Over residues 617–629 (VAPPPEEPTPPPT) the composition is skewed to pro residues. Positions 622–668 (EEPTPPPTQEQSLVEHGRNWGAIAKMVGSKSESQCKNFYFNYKRRHN) constitute an SANT 2 domain. The span at 692–702 (QCESVASTVSA) shows a compositional bias: polar residues. Residues 698–726 (STVSAQEDEENEASNEEENAEDSEGAENS) are a coiled coil. Residues 703–722 (QEDEENEASNEEENAEDSEG) are compositionally biased toward acidic residues. Over residues 723-741 (AENSSDTESAPSPSPAEAA) the composition is skewed to low complexity. Over residues 766–779 (ASKSVSDSSPTPTV) the composition is skewed to polar residues. The segment covering 829-864 (AEPDEVESKPSESAEVKIEEDTKDQDMERLMDRAEA) has biased composition (basic and acidic residues). Polar residues-rich tracts occupy residues 881-892 (ESQSDNDSSATC), 993-1004 (MSASPGNMSKSP), and 1104-1124 (ATSSDKPSFITGGSISQGTPG). Basic and acidic residues predominate over residues 1488–1504 (MGERSKYEDTKSSEAIR). Polar residues predominate over residues 1508 to 1519 (TSVVSSGPSVLR). A compositionally biased stretch (low complexity) spans 1548–1561 (PSPMSRSSPMARSA). Residues 1771 to 1810 (VSAERERERERDRERDREREKEQRERERDRERERERLAAA) adopt a coiled-coil conformation. Positions 1773–1807 (AERERERERDRERDREREKEQRERERDRERERERL) are enriched in basic and acidic residues. The segment covering 1835–1845 (PSPSVRAQESI) has biased composition (polar residues). The span at 1914–1935 (VKPKEMKHDPARSEESLSRRNV) shows a compositional bias: basic and acidic residues. Over residues 1953–1972 (QSPYTSSSFSGSKSQGQPSP) the composition is skewed to low complexity. Positions 1978-1987 (AGKEKTAHTK) are enriched in basic and acidic residues. Residues 2008 to 2012 (IDVII) carry the CORNR box 1 motif. The tract at residues 2018 to 2105 (SDKDGRDRNS…PSPQQTIPGH (88 aa)) is disordered. Low complexity predominate over residues 2027 to 2036 (SQSSDSSSSH). Residues 2039–2048 (HRYDAPRDTI) are compositionally biased toward basic and acidic residues. The span at 2088–2102 (RYRQQQESPSPQQTI) shows a compositional bias: polar residues. The short motif at 2119–2123 (ICQII) is the CORNR box 2 element. The span at 2135–2177 (QALQQPPASTFQSTNPSSTPVRTKASSRFSPESQVQPVHNQRP) shows a compositional bias: polar residues. Residues 2135–2216 (QALQQPPAST…YEPISPPQAP (82 aa)) are disordered. Basic and acidic residues predominate over residues 2186-2205 (VLDRPRGRPGKSPDRGHISE). The short motif at 2322 to 2326 (LEDII) is the CORNR box 3 element. 2 disordered regions span residues 2346–2413 (GVAQ…SVHS) and 2446–2494 (MLNS…DSDE). Residues 2376 to 2390 (HKQKLISKYGSRKTK) show a composition bias toward basic residues. 2 stretches are compositionally biased toward polar residues: residues 2446–2472 (MLNSTPPSSMSCAPTSMTQTSAHQQSR) and 2485–2494 (QYETLSDSDE).

Belongs to the N-CoR nuclear receptor corepressors family. As to quaternary structure, forms a large corepressor complex that contains sin3a/b, histone deacetylases hdac1 and hdac2, rbbp4 and possibly rbbp7. Interacts with the thyroid receptor (TR, composed of rxra and thrb) and the retinoid acid receptor (RAR, composed of rxra and rara) in the absence of ligand. Interacts with tbl1xr1. Interacts with zbtb33/kaiso.

Its subcellular location is the nucleus. Mediates transcriptional repression by certain nuclear receptors. Participates in complexes which promote histone deacetylation and the formation of repressive chromatin structures which may impede access by the basal transcription machinery. In association with hdac3, may play a role in the regulation of the circadian clock. The sequence is that of Nuclear receptor corepressor 1 (ncor1) from Xenopus tropicalis (Western clawed frog).